Consider the following 116-residue polypeptide: Large ribosomal subunit protein bL17 (116 aa).

The protein belongs to the bacterial ribosomal protein bL17 family. Part of the 50S ribosomal subunit. Contacts protein L32.

This is Large ribosomal subunit protein bL17 from Sulfurimonas denitrificans (strain ATCC 33889 / DSM 1251) (Thiomicrospira denitrificans (strain ATCC 33889 / DSM 1251)).